The chain runs to 564 residues: Potassium-transporting ATPase potassium-binding subunit (564 aa).

Transmembrane regions (helical) follow at residues Leu-7–Phe-27, Ala-67–Leu-87, Val-135–Leu-155, Leu-179–Pro-199, Phe-258–Val-278, Ala-286–Glu-306, Val-382–Ile-402, Leu-420–Ala-440, Leu-487–Leu-507, and Gly-528–Leu-548.

It belongs to the KdpA family. In terms of assembly, the system is composed of three essential subunits: KdpA, KdpB and KdpC.

The protein localises to the cell inner membrane. Functionally, part of the high-affinity ATP-driven potassium transport (or Kdp) system, which catalyzes the hydrolysis of ATP coupled with the electrogenic transport of potassium into the cytoplasm. This subunit binds the periplasmic potassium ions and delivers the ions to the membrane domain of KdpB through an intramembrane tunnel. This chain is Potassium-transporting ATPase potassium-binding subunit, found in Pseudomonas syringae pv. tomato (strain ATCC BAA-871 / DC3000).